Here is a 1342-residue protein sequence, read N- to C-terminus: DNA-directed RNA polymerase subunit beta (1342 aa).

Belongs to the RNA polymerase beta chain family. In terms of assembly, the RNAP catalytic core consists of 2 alpha, 1 beta, 1 beta' and 1 omega subunit. When a sigma factor is associated with the core the holoenzyme is formed, which can initiate transcription.

The enzyme catalyses RNA(n) + a ribonucleoside 5'-triphosphate = RNA(n+1) + diphosphate. In terms of biological role, DNA-dependent RNA polymerase catalyzes the transcription of DNA into RNA using the four ribonucleoside triphosphates as substrates. The sequence is that of DNA-directed RNA polymerase subunit beta from Citrobacter koseri (strain ATCC BAA-895 / CDC 4225-83 / SGSC4696).